Here is a 316-residue protein sequence, read N- to C-terminus: Ubiquinol oxidase, mitochondrial (316 aa).

The transit peptide at 1–26 directs the protein to the mitochondrion; sequence MGVRAQPLLARSLITTTQPWILSARS. A helical membrane pass occupies residues 124 to 144; sequence VHRAVVLETVAAVPGMVAGML. Glu-131, Glu-170, and His-173 together coordinate Fe cation. A helical transmembrane segment spans residues 189–209; that stretch reads MLVALVQTLFFNVYFLAYMLF. 3 residues coordinate Fe cation: Glu-221, Glu-272, and His-275.

The protein belongs to the alternative oxidase family. Fe cation serves as cofactor.

It localises to the mitochondrion inner membrane. It catalyses the reaction 2 a ubiquinol + O2 = 2 a ubiquinone + 2 H2O. Functionally, alternative oxidase which function may be to reoxidize reducing equivalents produced by glycolysis such as ubiquinol. This Batrachochytrium dendrobatidis (strain JAM81 / FGSC 10211) (Frog chytrid fungus) protein is Ubiquinol oxidase, mitochondrial (AOX).